Consider the following 341-residue polypeptide: Tryptophan--tRNA ligase (341 aa).

Residues 11–13 (RPT) and 19–20 (GH) contribute to the ATP site. Positions 12–20 (PTGKLHIGH) match the 'HIGH' region motif. Asp-140 is a binding site for L-tryptophan. ATP contacts are provided by residues 152-154 (GTD), Leu-194, and 202-206 (KMSKS). The 'KMSKS' region signature appears at 202-206 (KMSKS).

The protein belongs to the class-I aminoacyl-tRNA synthetase family. Homodimer.

It is found in the cytoplasm. The catalysed reaction is tRNA(Trp) + L-tryptophan + ATP = L-tryptophyl-tRNA(Trp) + AMP + diphosphate + H(+). Catalyzes the attachment of tryptophan to tRNA(Trp). In Streptococcus agalactiae serotype III (strain NEM316), this protein is Tryptophan--tRNA ligase.